The sequence spans 316 residues: UDP-N-acetylenolpyruvoylglucosamine reductase (316 aa).

In terms of domain architecture, FAD-binding PCMH-type spans 27-225; it reads VGGKAERFYR…KTAINALLKK (199 aa). The active site involves R190. The Proton donor role is filled by S239. Residue E309 is part of the active site.

This sequence belongs to the MurB family. Requires FAD as cofactor.

It localises to the cytoplasm. The catalysed reaction is UDP-N-acetyl-alpha-D-muramate + NADP(+) = UDP-N-acetyl-3-O-(1-carboxyvinyl)-alpha-D-glucosamine + NADPH + H(+). Its pathway is cell wall biogenesis; peptidoglycan biosynthesis. In terms of biological role, cell wall formation. In Coxiella burnetii (strain Dugway 5J108-111), this protein is UDP-N-acetylenolpyruvoylglucosamine reductase.